The sequence spans 432 residues: uncharacterized protein (432 aa).

2 SIS domains span residues 105-244 (WLTE…DLVS) and 277-422 (CDKK…VDLP).

This is an uncharacterized protein from Saccharomyces cerevisiae (strain ATCC 204508 / S288c) (Baker's yeast).